Reading from the N-terminus, the 409-residue chain is Gamma-glutamyl phosphate reductase (409 aa).

Belongs to the gamma-glutamyl phosphate reductase family.

It is found in the cytoplasm. It carries out the reaction L-glutamate 5-semialdehyde + phosphate + NADP(+) = L-glutamyl 5-phosphate + NADPH + H(+). The protein operates within amino-acid biosynthesis; L-proline biosynthesis; L-glutamate 5-semialdehyde from L-glutamate: step 2/2. Its function is as follows. Catalyzes the NADPH-dependent reduction of L-glutamate 5-phosphate into L-glutamate 5-semialdehyde and phosphate. The product spontaneously undergoes cyclization to form 1-pyrroline-5-carboxylate. The sequence is that of Gamma-glutamyl phosphate reductase from Koribacter versatilis (strain Ellin345).